A 325-amino-acid chain; its full sequence is Melanocortin receptor 5 (325 aa).

At 1-37 (MNSSFHLHFLDLNLNATEGNLSGPNVKNKSSPCEDMG) the chain is on the extracellular side. N2, N15, N20, and N28 each carry an N-linked (GlcNAc...) asparagine glycan. The chain crosses the membrane as a helical span at residues 38-61 (IAVEVFLTLGVISLLENILVIGAI). Residues 62–73 (VKNKNLHSPMYF) lie on the Cytoplasmic side of the membrane. Residues 74 to 97 (FVCSLAVADMLVSMSSAWETITIY) traverse the membrane as a helical segment. At 98 to 114 (LLNNKHLVIADAFVRHI) the chain is on the extracellular side. Residues 115–138 (DNVFDSMICISVVASMCSLLAIAV) traverse the membrane as a helical segment. At 139 to 155 (DRYVTIFYALRYHHIMT) the chain is on the cytoplasmic side. A helical membrane pass occupies residues 156–179 (ARRSGAIIAGIWAFCTGCGIVFIL). Residues 180 to 186 (YSESTYV) lie on the Extracellular side of the membrane. Residues 187–211 (ILCLISMFFAMLFLLVSLYIHMFLL) form a helical membrane-spanning segment. Residues 212–239 (ARTHVKRIAALPGASSARQRTSMQGAVT) lie on the Cytoplasmic side of the membrane. The helical transmembrane segment at 240–265 (VTMLLGVFTVCWAPFFLHLTLMLSCP) threads the bilayer. The Extracellular portion of the chain corresponds to 266-273 (QNLYCSRF). A helical membrane pass occupies residues 274–297 (MSHFNMYLILIMCNSVMDPLIYAF). At 298–325 (RSQEMRKTFKEIICCRGFRIACSFPRRD) the chain is on the cytoplasmic side. 2 S-palmitoyl cysteine lipidation sites follow: C311 and C312.

Belongs to the G-protein coupled receptor 1 family. Expressed in the brain but not in the melanoma cells.

It localises to the cell membrane. Receptor for MSH (alpha, beta and gamma) and ACTH. The activity of this receptor is mediated by G proteins which activate adenylate cyclase. This receptor is a possible mediator of the immunomodulation properties of melanocortins. This is Melanocortin receptor 5 (MC5R) from Homo sapiens (Human).